The chain runs to 182 residues: Adenylate kinase (182 aa).

12-17 (GAGKGT) contacts ATP. Residues 32–61 (STGELLRKEIDLDTYLGKQVKDIMNKGELV) form an NMP region. AMP contacts are provided by residues T33, R38, 59-61 (ELV), 85-88 (GYPR), and Q92. Residues 126 to 132 (LRGRKDD) are LID. Residue R127 coordinates ATP. AMP is bound by residues R129 and R140. G168 provides a ligand contact to ATP.

The protein belongs to the adenylate kinase family. In terms of assembly, monomer.

Its subcellular location is the cytoplasm. It catalyses the reaction AMP + ATP = 2 ADP. The protein operates within purine metabolism; AMP biosynthesis via salvage pathway; AMP from ADP: step 1/1. Its function is as follows. Catalyzes the reversible transfer of the terminal phosphate group between ATP and AMP. Plays an important role in cellular energy homeostasis and in adenine nucleotide metabolism. The chain is Adenylate kinase from Prochlorococcus marinus (strain MIT 9515).